The following is a 237-amino-acid chain: Uridylate kinase (237 aa).

12–15 (KLSG) is an ATP binding site. The interval 20 to 25 (GAEGFG) is involved in allosteric activation by GTP. Residue glycine 54 coordinates UMP. ATP contacts are provided by glycine 55 and arginine 59. UMP-binding positions include aspartate 74 and 135 to 142 (TGSPFFTT). Residues threonine 162, tyrosine 168, and aspartate 171 each contribute to the ATP site.

It belongs to the UMP kinase family. As to quaternary structure, homohexamer.

The protein resides in the cytoplasm. It carries out the reaction UMP + ATP = UDP + ADP. Its pathway is pyrimidine metabolism; CTP biosynthesis via de novo pathway; UDP from UMP (UMPK route): step 1/1. Its activity is regulated as follows. Allosterically activated by GTP. Inhibited by UTP. Its function is as follows. Catalyzes the reversible phosphorylation of UMP to UDP. The sequence is that of Uridylate kinase from Actinobacillus succinogenes (strain ATCC 55618 / DSM 22257 / CCUG 43843 / 130Z).